The chain runs to 162 residues: NADH-quinone oxidoreductase subunit I (162 aa).

2 consecutive 4Fe-4S ferredoxin-type domains span residues 52-82 (LRRY…IEAG) and 93-122 (VRYD…EGPN). Residues Cys-62, Cys-65, Cys-68, Cys-72, Cys-102, Cys-105, Cys-108, and Cys-112 each coordinate [4Fe-4S] cluster.

Belongs to the complex I 23 kDa subunit family. In terms of assembly, NDH-1 is composed of 14 different subunits. Subunits NuoA, H, J, K, L, M, N constitute the membrane sector of the complex. [4Fe-4S] cluster serves as cofactor.

It is found in the cell inner membrane. The catalysed reaction is a quinone + NADH + 5 H(+)(in) = a quinol + NAD(+) + 4 H(+)(out). NDH-1 shuttles electrons from NADH, via FMN and iron-sulfur (Fe-S) centers, to quinones in the respiratory chain. The immediate electron acceptor for the enzyme in this species is believed to be ubiquinone. Couples the redox reaction to proton translocation (for every two electrons transferred, four hydrogen ions are translocated across the cytoplasmic membrane), and thus conserves the redox energy in a proton gradient. This Nitrobacter winogradskyi (strain ATCC 25391 / DSM 10237 / CIP 104748 / NCIMB 11846 / Nb-255) protein is NADH-quinone oxidoreductase subunit I.